A 40-amino-acid chain; its full sequence is RNA replication protein (40 aa).

Belongs to the potexviruses/carlaviruses RNA replication protein family.

The catalysed reaction is RNA(n) + a ribonucleoside 5'-triphosphate = RNA(n+1) + diphosphate. It catalyses the reaction ATP + H2O = ADP + phosphate + H(+). Functionally, RNA replication. The central part of this protein possibly functions as an ATP-binding helicase. The polypeptide is RNA replication protein (Lily symptomless virus (LSV)).